The chain runs to 390 residues: Dual-specificity RNA methyltransferase RlmN (390 aa).

Glu111 acts as the Proton acceptor in catalysis. The Radical SAM core domain occupies 117–356; that stretch reads EDDRATLCVS…VIVRKTRGDD (240 aa). An intrachain disulfide couples Cys124 to Cys361. [4Fe-4S] cluster is bound by residues Cys131, Cys135, and Cys138. Residues 185–186, Ser217, 239–241, and Asn318 each bind S-adenosyl-L-methionine; these read GE and SLH. Cys361 serves as the catalytic S-methylcysteine intermediate.

It belongs to the radical SAM superfamily. RlmN family. It depends on [4Fe-4S] cluster as a cofactor.

The protein resides in the cytoplasm. The enzyme catalyses adenosine(2503) in 23S rRNA + 2 reduced [2Fe-2S]-[ferredoxin] + 2 S-adenosyl-L-methionine = 2-methyladenosine(2503) in 23S rRNA + 5'-deoxyadenosine + L-methionine + 2 oxidized [2Fe-2S]-[ferredoxin] + S-adenosyl-L-homocysteine. It catalyses the reaction adenosine(37) in tRNA + 2 reduced [2Fe-2S]-[ferredoxin] + 2 S-adenosyl-L-methionine = 2-methyladenosine(37) in tRNA + 5'-deoxyadenosine + L-methionine + 2 oxidized [2Fe-2S]-[ferredoxin] + S-adenosyl-L-homocysteine. Functionally, specifically methylates position 2 of adenine 2503 in 23S rRNA and position 2 of adenine 37 in tRNAs. m2A2503 modification seems to play a crucial role in the proofreading step occurring at the peptidyl transferase center and thus would serve to optimize ribosomal fidelity. The polypeptide is Dual-specificity RNA methyltransferase RlmN (Edwardsiella ictaluri (strain 93-146)).